Consider the following 246-residue polypeptide: Probable transcriptional regulatory protein CLB_3102 (246 aa).

Belongs to the TACO1 family.

It is found in the cytoplasm. In Clostridium botulinum (strain ATCC 19397 / Type A), this protein is Probable transcriptional regulatory protein CLB_3102.